A 146-amino-acid polypeptide reads, in one-letter code: Large ribosomal subunit protein bL9 (146 aa).

The protein belongs to the bacterial ribosomal protein bL9 family.

In terms of biological role, binds to the 23S rRNA. The chain is Large ribosomal subunit protein bL9 from Nautilia profundicola (strain ATCC BAA-1463 / DSM 18972 / AmH).